Reading from the N-terminus, the 265-residue chain is Phosphate import ATP-binding protein PstB 2 (265 aa).

The region spanning 13–260 (FRTENLNVYY…PTKQATRDYV (248 aa)) is the ABC transporter domain. 45–52 (GPSGCGKS) lines the ATP pocket.

Belongs to the ABC transporter superfamily. Phosphate importer (TC 3.A.1.7) family. As to quaternary structure, the complex is composed of two ATP-binding proteins (PstB), two transmembrane proteins (PstC and PstA) and a solute-binding protein (PstS).

It is found in the cell inner membrane. The catalysed reaction is phosphate(out) + ATP + H2O = ADP + 2 phosphate(in) + H(+). Functionally, part of the ABC transporter complex PstSACB involved in phosphate import. Responsible for energy coupling to the transport system. The sequence is that of Phosphate import ATP-binding protein PstB 2 from Synechococcus sp. (strain JA-2-3B'a(2-13)) (Cyanobacteria bacterium Yellowstone B-Prime).